The chain runs to 464 residues: Histidine--tRNA ligase (464 aa).

This sequence belongs to the class-II aminoacyl-tRNA synthetase family. In terms of assembly, homodimer.

It is found in the cytoplasm. The catalysed reaction is tRNA(His) + L-histidine + ATP = L-histidyl-tRNA(His) + AMP + diphosphate + H(+). This is Histidine--tRNA ligase from Stenotrophomonas maltophilia (strain K279a).